The primary structure comprises 38 residues: Large ribosomal subunit protein bL36 (38 aa).

Belongs to the bacterial ribosomal protein bL36 family.

The polypeptide is Large ribosomal subunit protein bL36 (Porphyromonas gingivalis (strain ATCC 33277 / DSM 20709 / CIP 103683 / JCM 12257 / NCTC 11834 / 2561)).